Reading from the N-terminus, the 227-residue chain is MTNNLSGYRNKFVRVKTSKKRTVSSSNWLRRQLNDPYVAKARIDGFRSRAAYKLLEIHEKFKLFTPNMKVVDLGAAPGGWSQVASKLIKASDNNLNNKIISIDVLEIEHVAGVEFVQKDFFEADTEELIIQALDGRADIVMSDMASNTIGHKATDHIRTLLLCEQAFEFALKVLKPSGHFIAKIFRGGAENELLHKVKREFKTVKHFKPSSSRSESTEIYLVALNKK.

S-adenosyl-L-methionine is bound by residues G78, W80, D103, D119, and D143. Residue K183 is the Proton acceptor of the active site.

Belongs to the class I-like SAM-binding methyltransferase superfamily. RNA methyltransferase RlmE family.

The protein resides in the cytoplasm. It carries out the reaction uridine(2552) in 23S rRNA + S-adenosyl-L-methionine = 2'-O-methyluridine(2552) in 23S rRNA + S-adenosyl-L-homocysteine + H(+). Its function is as follows. Specifically methylates the uridine in position 2552 of 23S rRNA at the 2'-O position of the ribose in the fully assembled 50S ribosomal subunit. The sequence is that of Ribosomal RNA large subunit methyltransferase E from Rickettsia rickettsii (strain Iowa).